We begin with the raw amino-acid sequence, 778 residues long: Pentatricopeptide repeat-containing protein At3g09650, chloroplastic (778 aa).

The transit peptide at 1-65 (MNILRPPTSS…RSASGTANSS (65 aa)) directs the protein to the chloroplast. PPR repeat units follow at residues 235–269 (DTAAFNAVLNACANLGDTDKYWKLFEEMSEWDCEP), 270–304 (DVLTYNVMIKLCARVGRKELIVFVLERIIDKGIKV), and 305–339 (CMTTMHSLVAAYVGFGDLRTAERIVQAMREKRRDL). The segment at 351–381 (LKEKEEEEAEDDEDAFEDDEDSGYSARDEVS) is disordered. Positions 355–372 (EEEEAEDDEDAFEDDEDS) are enriched in acidic residues. PPR repeat units follow at residues 413–443 (DSRIYTTLMKGYMKNGRVADTARMLEAMRRQ), 451–485 (DEVTYTTVVSAFVNAGLMDRARQVLAEMARMGVPA), 486–521 (NRITYNVLLKGYCKQLQIDRAEDLLREMTEDAGIEP), 522–556 (DVVSYNIIIDGCILIDDSAGALAFFNEMRTRGIAP), 557–587 (TKISYTTLMKAFAMSGQPKLANRVFDEMMND), 593–627 (DLIAWNMLVEGYCRLGLIEDAQRVVSRMKENGFYP), and 628–658 (NVATYGSLANGVSQARKPGDALLLWKEIKER).

The protein belongs to the PPR family. P subfamily.

Its subcellular location is the plastid. It localises to the chloroplast stroma. Functionally, involved in the processing of polycistronic chloroplast psbB-psbT-psbH-petB-petD transcript. Could bind RNA. The polypeptide is Pentatricopeptide repeat-containing protein At3g09650, chloroplastic (HCF152) (Arabidopsis thaliana (Mouse-ear cress)).